The chain runs to 774 residues: Two pore channel protein 2 (774 aa).

The Cytoplasmic portion of the chain corresponds to Met1–Tyr92. The helical transmembrane segment at Ser93 to Ile113 threads the bilayer. Topologically, residues Glu114–Glu140 are extracellular. Residues Gly141 to Ile161 traverse the membrane as a helical segment. The Cytoplasmic segment spans residues Gly162 to Lys170. Residues Trp171–Ser191 traverse the membrane as a helical segment. Topologically, residues Met192 to Asn197 are extracellular. The chain crosses the membrane as a helical span at residues Leu198 to Lys218. Residues Lys217–Lys221 form an interaction with phosphatidylinositol 3,5-bisphosphate region. At Thr219–Ser232 the chain is on the cytoplasmic side. A helical membrane pass occupies residues Val233–Ala253. Residues Lys254–Tyr267 are Extracellular-facing. The helical; Pore-forming intramembrane region spans Phe268–Ile292. Residues Pro293–Ser302 are Extracellular-facing. A helical membrane pass occupies residues Ile303–Ile323. Topologically, residues Ile324 to Val452 are cytoplasmic. Residues Leu453–Lys475 traverse the membrane as a helical segment. The Extracellular portion of the chain corresponds to Ser476–Glu486. A helical transmembrane segment spans residues Ile487–Phe507. Topologically, residues Gly508 to Asn518 are cytoplasmic. Residues Ile519–Phe539 form a helical membrane-spanning segment. Residues Lys540–Asn564 lie on the Extracellular side of the membrane. The chain crosses the membrane as a helical span at residues Met565–Ala585. Topologically, residues Ser586–Arg596 are cytoplasmic. Residues Ala597 to Phe617 traverse the membrane as a helical segment. Topologically, residues Gln618–Asn658 are extracellular. 3 N-linked (GlcNAc...) asparagine glycosylation sites follow: Asn626, Asn632, and Asn637. The segment at residues Phe659–Phe681 is an intramembrane region (helical; Pore-forming). Over Thr682–Tyr696 the chain is Extracellular. The helical transmembrane segment at Phe697–Leu717 threads the bilayer. The Cytoplasmic portion of the chain corresponds to Glu718–Trp774.

It belongs to the calcium channel alpha-1 subunit (TC 1.A.1.11) family. Two pore calcium channel subfamily. Homodimer. N-glycosylated.

It localises to the late endosome membrane. The protein localises to the lysosome membrane. It catalyses the reaction Na(+)(in) = Na(+)(out). The catalysed reaction is Ca(2+)(in) = Ca(2+)(out). In terms of biological role, intracellular channel initially characterized as a non-selective Ca(2+)-permeable channel activated by NAADP (nicotinic acid adenine dinucleotide phosphate), it is also a highly-selective Na(+) channel activated directly by PI(3,5)P2 (phosphatidylinositol 3,5-bisphosphate). Localizes to the lysosomal and late endosome membranes where it regulates organellar membrane excitability, membrane trafficking, and pH homeostasis. This chain is Two pore channel protein 2 (tpcn2), found in Danio rerio (Zebrafish).